The primary structure comprises 380 residues: tRNA-specific 2-thiouridylase MnmA (380 aa).

Residues 26–33 and Leu-52 each bind ATP; that span reads AMSGGVDS. Cys-120 (nucleophile) is an active-site residue. Cysteines 120 and 217 form a disulfide. Position 144 (Gly-144) interacts with ATP. The interaction with tRNA stretch occupies residues 166-168; that stretch reads RDQ. The active-site Cysteine persulfide intermediate is the Cys-217.

This sequence belongs to the MnmA/TRMU family.

It localises to the cytoplasm. The enzyme catalyses S-sulfanyl-L-cysteinyl-[protein] + uridine(34) in tRNA + AH2 + ATP = 2-thiouridine(34) in tRNA + L-cysteinyl-[protein] + A + AMP + diphosphate + H(+). Functionally, catalyzes the 2-thiolation of uridine at the wobble position (U34) of tRNA, leading to the formation of s(2)U34. This chain is tRNA-specific 2-thiouridylase MnmA, found in Jannaschia sp. (strain CCS1).